The chain runs to 225 residues: Ribose-5-phosphate isomerase A (225 aa).

The tract at residues 1 to 20 (MKQSGGTEAQKRRAGKQAAD) is disordered. Substrate is bound by residues 32–35 (TGST), 86–89 (DGAD), and 98–101 (KGGG). Residue glutamate 107 is the Proton acceptor of the active site. Lysine 125 lines the substrate pocket.

It belongs to the ribose 5-phosphate isomerase family. As to quaternary structure, homodimer.

The catalysed reaction is aldehydo-D-ribose 5-phosphate = D-ribulose 5-phosphate. The protein operates within carbohydrate degradation; pentose phosphate pathway; D-ribose 5-phosphate from D-ribulose 5-phosphate (non-oxidative stage): step 1/1. Catalyzes the reversible conversion of ribose-5-phosphate to ribulose 5-phosphate. In Natronomonas pharaonis (strain ATCC 35678 / DSM 2160 / CIP 103997 / JCM 8858 / NBRC 14720 / NCIMB 2260 / Gabara) (Halobacterium pharaonis), this protein is Ribose-5-phosphate isomerase A.